Reading from the N-terminus, the 305-residue chain is Methionyl-tRNA formyltransferase (305 aa).

110–113 (SLLP) is a binding site for (6S)-5,6,7,8-tetrahydrofolate.

Belongs to the Fmt family.

It carries out the reaction L-methionyl-tRNA(fMet) + (6R)-10-formyltetrahydrofolate = N-formyl-L-methionyl-tRNA(fMet) + (6S)-5,6,7,8-tetrahydrofolate + H(+). Its function is as follows. Attaches a formyl group to the free amino group of methionyl-tRNA(fMet). The formyl group appears to play a dual role in the initiator identity of N-formylmethionyl-tRNA by promoting its recognition by IF2 and preventing the misappropriation of this tRNA by the elongation apparatus. This is Methionyl-tRNA formyltransferase from Gluconacetobacter diazotrophicus (strain ATCC 49037 / DSM 5601 / CCUG 37298 / CIP 103539 / LMG 7603 / PAl5).